The sequence spans 197 residues: TLE family member 5 (197 aa).

The interval 166-197 (LSALGSQTHLSKEDKNGHDGDTHQEDDGEKSD) is CCN domain. Residues 170-197 (GSQTHLSKEDKNGHDGDTHQEDDGEKSD) are disordered. Positions 175–197 (LSKEDKNGHDGDTHQEDDGEKSD) are enriched in basic and acidic residues. At serine 196 the chain carries Phosphoserine.

This sequence belongs to the WD repeat Groucho/TLE family. In terms of assembly, homooligomer and heterooligomer with other family members. Binds TCF7 and the NF-kappa-B subunit RELA. Interacts with PHF12. Interacts (via Q domain) with SIX3. Interacts with SIX6. Ubiquitinated by XIAP/BIRC4. Ubiquitously expressed in developing embryos by midgestation, a wide expression is conserved in adult. In mouse, abundantly expressed in muscle, heart and brain.

Its subcellular location is the nucleus. Transcriptional corepressor. Acts as a dominant repressor towards other family members. Inhibits NF-kappa-B-regulated gene expression. May be required for the initiation and maintenance of the differentiated state. Essential for the transcriptional repressor activity of SIX3 during retina and lens development. This is TLE family member 5 from Mus musculus (Mouse).